Reading from the N-terminus, the 170-residue chain is MDDVNSIVLAAGQAAEEGGTNNFLVPNGTFFFVLAIFLVVLAVIGTFVVPPILKVLRERDAMVAMTLADNKKSAEQFAAAQADYEKAMAEARVQASSYRHNARAEGRKVVEDARAHAEQEVASTLQQANEQLKRERDAVELDLRANVGAMSATLANRIVGVDVTTPAAAG.

A helical transmembrane segment spans residues 30-50; it reads FFFVLAIFLVVLAVIGTFVVP.

Belongs to the ATPase B chain family. F-type ATPases have 2 components, F(1) - the catalytic core - and F(0) - the membrane proton channel. F(1) has five subunits: alpha(3), beta(3), gamma(1), delta(1), epsilon(1). F(0) has three main subunits: a(1), b(2) and c(10-14). The alpha and beta chains form an alternating ring which encloses part of the gamma chain. F(1) is attached to F(0) by a central stalk formed by the gamma and epsilon chains, while a peripheral stalk is formed by the delta and b chains.

It localises to the cell membrane. Functionally, f(1)F(0) ATP synthase produces ATP from ADP in the presence of a proton or sodium gradient. F-type ATPases consist of two structural domains, F(1) containing the extramembraneous catalytic core and F(0) containing the membrane proton channel, linked together by a central stalk and a peripheral stalk. During catalysis, ATP synthesis in the catalytic domain of F(1) is coupled via a rotary mechanism of the central stalk subunits to proton translocation. Component of the F(0) channel, it forms part of the peripheral stalk, linking F(1) to F(0). The polypeptide is ATP synthase subunit b (Mycobacterium ulcerans (strain Agy99)).